A 182-amino-acid polypeptide reads, in one-letter code: Large ribosomal subunit protein uL5 (182 aa).

This sequence belongs to the universal ribosomal protein uL5 family. Part of the 50S ribosomal subunit; part of the 5S rRNA/L5/L18/L25 subcomplex. Contacts the 5S rRNA and the P site tRNA. Forms a bridge to the 30S subunit in the 70S ribosome.

Functionally, this is one of the proteins that bind and probably mediate the attachment of the 5S RNA into the large ribosomal subunit, where it forms part of the central protuberance. In the 70S ribosome it contacts protein S13 of the 30S subunit (bridge B1b), connecting the 2 subunits; this bridge is implicated in subunit movement. Contacts the P site tRNA; the 5S rRNA and some of its associated proteins might help stabilize positioning of ribosome-bound tRNAs. This is Large ribosomal subunit protein uL5 from Borrelia duttonii (strain Ly).